The following is a 191-amino-acid chain: Acireductone dioxygenase 2 (191 aa).

The Fe(2+) site is built by His-102, His-104, Glu-108, and His-146. Residues His-102, His-104, Glu-108, and His-146 each contribute to the Ni(2+) site.

Belongs to the acireductone dioxygenase (ARD) family. As to quaternary structure, monomer. Fe(2+) is required as a cofactor. Ni(2+) serves as cofactor.

The catalysed reaction is 1,2-dihydroxy-5-(methylsulfanyl)pent-1-en-3-one + O2 = 3-(methylsulfanyl)propanoate + CO + formate + 2 H(+). It catalyses the reaction 1,2-dihydroxy-5-(methylsulfanyl)pent-1-en-3-one + O2 = 4-methylsulfanyl-2-oxobutanoate + formate + 2 H(+). The protein operates within amino-acid biosynthesis; L-methionine biosynthesis via salvage pathway; L-methionine from S-methyl-5-thio-alpha-D-ribose 1-phosphate: step 5/6. Catalyzes 2 different reactions between oxygen and the acireductone 1,2-dihydroxy-3-keto-5-methylthiopentene (DHK-MTPene) depending upon the metal bound in the active site. Fe-containing acireductone dioxygenase (Fe-ARD) produces formate and 2-keto-4-methylthiobutyrate (KMTB), the alpha-ketoacid precursor of methionine in the methionine recycle pathway. Ni-containing acireductone dioxygenase (Ni-ARD) produces methylthiopropionate, carbon monoxide and formate, and does not lie on the methionine recycle pathway. In Nocardia farcinica (strain IFM 10152), this protein is Acireductone dioxygenase 2.